The primary structure comprises 383 residues: MAIRIKSTRVGRFVSESVGLGHPDKICDQIADSILDQCLLQSKTSHVACEVFASKNLILIGGEISTSGYVDVVQTAWRILRNLGYNETDFSFLSCINNQSLEINQAVLKNNEINAGDQGITVGYAVNETKQLMPLGVLLAHSFLKQAEKLTKQFDFLKNDMKSQVVLNYSLNQVECEEVLLSIQHTNAISLTELRKVIENNVILPVLNQYGFQDKKPTCLVNPGGSFVLGGPMADTGLTGRKIIVDTYGPYAHHGGGSFSGKDPSKVDRTGAYFARFIAKHIVSLGWASECEVSISWVFSKPNPQSITVKCFNTNIQYDEVLINRVVNNYFNWSITKIIDKLKLLDFVKYSDYAVYGHFGNDLSPWEQPTELDKLECLIKNFH.

ATP is bound at residue histidine 22. Residue aspartate 24 participates in Mg(2+) binding. Glutamate 50 is a K(+) binding site. The L-methionine site is built by glutamate 63 and glutamine 99. The tract at residues 99–109 is flexible loop; it reads QSLEINQAVLK. Residues 160–162, aspartate 235, 241–242, serine 258, and lysine 262 each bind ATP; these read DMK and RK. Aspartate 235 contacts L-methionine. Lysine 266 provides a ligand contact to L-methionine.

It belongs to the AdoMet synthase family. Homotetramer; dimer of dimers. Mg(2+) is required as a cofactor. It depends on K(+) as a cofactor.

It is found in the cytoplasm. The catalysed reaction is L-methionine + ATP + H2O = S-adenosyl-L-methionine + phosphate + diphosphate. The protein operates within amino-acid biosynthesis; S-adenosyl-L-methionine biosynthesis; S-adenosyl-L-methionine from L-methionine: step 1/1. Its function is as follows. Catalyzes the formation of S-adenosylmethionine (AdoMet) from methionine and ATP. The overall synthetic reaction is composed of two sequential steps, AdoMet formation and the subsequent tripolyphosphate hydrolysis which occurs prior to release of AdoMet from the enzyme. The sequence is that of S-adenosylmethionine synthase from Mycoplasma genitalium (strain ATCC 33530 / DSM 19775 / NCTC 10195 / G37) (Mycoplasmoides genitalium).